The sequence spans 84 residues: Small ribosomal subunit protein bS16 (84 aa).

The protein belongs to the bacterial ribosomal protein bS16 family.

The sequence is that of Small ribosomal subunit protein bS16 from Paraburkholderia phytofirmans (strain DSM 17436 / LMG 22146 / PsJN) (Burkholderia phytofirmans).